A 131-amino-acid chain; its full sequence is Protein TIFY 5A (131 aa).

The EAR signature appears at 9–13 (LELRL). Disordered stretches follow at residues 14 to 44 (FPTSYDSDSSDTTSVVESTSSGNPQPNEESQ) and 74 to 131 (REMK…HSRR). A compositionally biased stretch (low complexity) spans 16–34 (TSYDSDSSDTTSVVESTSS). The region spanning 39-74 (PNEESQRITIFYNGKMCFSSDVTHLQARSIISIASR) is the Tify domain. The segment covering 79–100 (KSSSNGSDPPNKSTSFHHNQLP) has biased composition (polar residues). Positions 105–127 (SMKKSLQSFLQKRKIRIQATSPY) match the Jas motif. The Nuclear localization signal motif lies at 106–113 (MKKSLQSF). The span at 122–131 (QATSPYHSRR) shows a compositional bias: polar residues.

This sequence belongs to the TIFY/JAZ family. Interacts with TPL and weakly with COI1, but not with AFPH2/NINJA. Interacts with MYC2, MYB21, MYB24, TIFY10A/JAZ1, TIFY10B/JAZ2, TIFY6B/JAZ3, TIFY6A/JAZ4, TIFY11A/JAZ5, TIFY11B/JAZ6, TIFY7/JAZ9, TIFY9/JAZ10 and TIFY3B/JAZ12. Interacts with RHD6 and RSL1. As to quaternary structure, (Microbial infection) Interacts with the pathogenic Pseudomonas syringae HopZ1a protein. Post-translationally, (Microbial infection) Acetylated by Pseudomonas syringae HopZ1a. Ubiquitinated.

The protein resides in the nucleus. Repressor of jasmonate responses. Unable to associate strongly with COI1 in the presence of jasmonoyl-isoleucine (JA-Ile) and is therefore more resistant to JA-mediated-degradation than other TIFY/JAZ proteins. Repress gene expression through direct recruitment of the corepressor TOPLESS to cognate transcription factors. Interacts with and suppresses RHD6 and RSL1 transcription factor activities to negatively regulate jasmonate-stimulated root hair development. The sequence is that of Protein TIFY 5A from Arabidopsis thaliana (Mouse-ear cress).